The sequence spans 65 residues: Large ribosomal subunit protein bL35 (65 aa).

Belongs to the bacterial ribosomal protein bL35 family.

The protein is Large ribosomal subunit protein bL35 of Xanthomonas campestris pv. campestris (strain ATCC 33913 / DSM 3586 / NCPPB 528 / LMG 568 / P 25).